We begin with the raw amino-acid sequence, 1146 residues long: Transcription-repair-coupling factor (1146 aa).

Residues 617–778 form the Helicase ATP-binding domain; the sequence is DMCQPKAMDR…MNGIRDLSII (162 aa). 630-637 lines the ATP pocket; it reads GDVGFGKT. A DEEH box motif is present at residues 731 to 734; it reads DEEH. The Helicase C-terminal domain occupies 800 to 953; sequence VREAILREIL…GFILATHDLE (154 aa).

It in the N-terminal section; belongs to the UvrB family. The protein in the C-terminal section; belongs to the helicase family. RecG subfamily.

It is found in the cytoplasm. Its function is as follows. Couples transcription and DNA repair by recognizing RNA polymerase (RNAP) stalled at DNA lesions. Mediates ATP-dependent release of RNAP and its truncated transcript from the DNA, and recruitment of nucleotide excision repair machinery to the damaged site. This is Transcription-repair-coupling factor from Haemophilus influenzae (strain ATCC 51907 / DSM 11121 / KW20 / Rd).